Here is a 186-residue protein sequence, read N- to C-terminus: Ribosome-recycling factor (186 aa).

Belongs to the RRF family.

The protein localises to the cytoplasm. In terms of biological role, responsible for the release of ribosomes from messenger RNA at the termination of protein biosynthesis. May increase the efficiency of translation by recycling ribosomes from one round of translation to another. This Bordetella avium (strain 197N) protein is Ribosome-recycling factor.